The chain runs to 147 residues: Protein archease (147 aa).

Aspartate 17, aspartate 146, and isoleucine 147 together coordinate Ca(2+).

The protein belongs to the archease family.

In terms of biological role, activates the tRNA-splicing ligase complex by facilitating the enzymatic turnover of catalytic subunit RtcB. Acts by promoting the guanylylation of RtcB, a key intermediate step in tRNA ligation. Can also alter the NTP specificity of RtcB such that ATP, dGTP or ITP is used efficiently. The polypeptide is Protein archease (Pyrobaculum calidifontis (strain DSM 21063 / JCM 11548 / VA1)).